A 201-amino-acid chain; its full sequence is FMN-dependent NADH:quinone oxidoreductase (201 aa).

FMN-binding positions include Ser-10, Ser-16–Ser-18, Met-96–Phe-99, and Ser-140–Gly-143.

The protein belongs to the azoreductase type 1 family. As to quaternary structure, homodimer. Requires FMN as cofactor.

The catalysed reaction is 2 a quinone + NADH + H(+) = 2 a 1,4-benzosemiquinone + NAD(+). It catalyses the reaction N,N-dimethyl-1,4-phenylenediamine + anthranilate + 2 NAD(+) = 2-(4-dimethylaminophenyl)diazenylbenzoate + 2 NADH + 2 H(+). Quinone reductase that provides resistance to thiol-specific stress caused by electrophilic quinones. Functionally, also exhibits azoreductase activity. Catalyzes the reductive cleavage of the azo bond in aromatic azo compounds to the corresponding amines. In Escherichia coli O6:H1 (strain CFT073 / ATCC 700928 / UPEC), this protein is FMN-dependent NADH:quinone oxidoreductase.